Consider the following 372-residue polypeptide: N-methyl-L-tryptophan oxidase (372 aa).

4–34 (DLIIIGSGSVGAAAGYYATRAGLNVLMTDAH) serves as a coordination point for FAD. S-8alpha-FAD cysteine is present on cysteine 308.

This sequence belongs to the MSOX/MTOX family. MTOX subfamily. As to quaternary structure, monomer. FAD serves as cofactor.

The enzyme catalyses N(alpha)-methyl-L-tryptophan + O2 + H2O = L-tryptophan + formaldehyde + H2O2. Its function is as follows. Catalyzes the oxidative demethylation of N-methyl-L-tryptophan. The polypeptide is N-methyl-L-tryptophan oxidase (Escherichia coli (strain SMS-3-5 / SECEC)).